The chain runs to 125 residues: C-X-C motif chemokine 9 (125 aa).

A signal peptide spans 1-22 (MKKSGVLFLLGIILLVLIGVQG). 2 cysteine pairs are disulfide-bonded: C31–C58 and C33–C74. Positions 93–125 (VSQKKKQKNGKKHQKKKVLKVRKSQRSRQKKTT) are disordered. Residues 94–125 (SQKKKQKNGKKHQKKKVLKVRKSQRSRQKKTT) show a composition bias toward basic residues.

The protein belongs to the intercrine alpha (chemokine CxC) family.

It is found in the secreted. Functionally, cytokine that affects the growth, movement, or activation state of cells that participate in immune and inflammatory response. Chemotactic for activated T-cells. Binds to CXCR3. The chain is C-X-C motif chemokine 9 (CXCL9) from Homo sapiens (Human).